The following is a 237-amino-acid chain: Probable transcriptional regulatory protein EAT1b_0153 (237 aa).

This sequence belongs to the TACO1 family. YeeN subfamily.

It localises to the cytoplasm. The chain is Probable transcriptional regulatory protein EAT1b_0153 from Exiguobacterium sp. (strain ATCC BAA-1283 / AT1b).